The sequence spans 341 residues: Putative methyltransferase YGR283C (341 aa).

This sequence belongs to the class IV-like SAM-binding methyltransferase superfamily.

Its subcellular location is the nucleus. The protein localises to the nucleolus. The polypeptide is Putative methyltransferase YGR283C (Saccharomyces cerevisiae (strain ATCC 204508 / S288c) (Baker's yeast)).